The sequence spans 537 residues: CTP synthase (537 aa).

Residues 1–267 form an amidoligase domain region; sequence MTKYIFVTGG…DQIVCDHLKL (267 aa). CTP is bound at residue serine 13. Position 13 (serine 13) interacts with UTP. An ATP-binding site is contributed by 14-19; sequence SIGKGI. Position 54 (tyrosine 54) interacts with L-glutamine. Aspartate 71 contacts ATP. Residues aspartate 71 and glutamate 141 each contribute to the Mg(2+) site. Residues 148 to 150, 188 to 193, and lysine 224 each bind CTP; these read DIE and KTKPTQ. Residues 188–193 and lysine 224 each bind UTP; that span reads KTKPTQ. Position 240-242 (240-242) interacts with ATP; sequence RDV. The region spanning 292–535 is the Glutamine amidotransferase type-1 domain; that stretch reads RIALVGKYVE…VTAAVKNKNQ (244 aa). Position 354 (glycine 354) interacts with L-glutamine. The active-site Nucleophile; for glutamine hydrolysis is cysteine 381. L-glutamine-binding positions include 382-385, glutamate 405, and arginine 463; that span reads LGMQ. Catalysis depends on residues histidine 508 and glutamate 510.

The protein belongs to the CTP synthase family. Homotetramer.

It catalyses the reaction UTP + L-glutamine + ATP + H2O = CTP + L-glutamate + ADP + phosphate + 2 H(+). The catalysed reaction is L-glutamine + H2O = L-glutamate + NH4(+). It carries out the reaction UTP + NH4(+) + ATP = CTP + ADP + phosphate + 2 H(+). It functions in the pathway pyrimidine metabolism; CTP biosynthesis via de novo pathway; CTP from UDP: step 2/2. Its activity is regulated as follows. Allosterically activated by GTP, when glutamine is the substrate; GTP has no effect on the reaction when ammonia is the substrate. The allosteric effector GTP functions by stabilizing the protein conformation that binds the tetrahedral intermediate(s) formed during glutamine hydrolysis. Inhibited by the product CTP, via allosteric rather than competitive inhibition. In terms of biological role, catalyzes the ATP-dependent amination of UTP to CTP with either L-glutamine or ammonia as the source of nitrogen. Regulates intracellular CTP levels through interactions with the four ribonucleotide triphosphates. The chain is CTP synthase from Streptococcus equi subsp. equi (strain 4047).